A 490-amino-acid chain; its full sequence is Dual specificity protein kinase CLK3 (490 aa).

Residues 1-138 (MHHCKRYRSP…SKRSSRSVED (138 aa)) are disordered. The residue at position 7 (Tyr7) is a Phosphotyrosine. A phosphoserine mark is found at Ser9, Ser49, Ser51, Ser67, Ser76, and Ser78. Composition is skewed to basic and acidic residues over residues 26–56 (YSRE…DRLP) and 63–76 (ERRD…EERS). Residues 88 to 116 (RSRHRRRSRERGPYRTRKHAHHCHKRRTR) are compositionally biased toward basic residues. Residues 117–130 (SCSSASSRSQQSSK) are compositionally biased toward low complexity. Residue Ser135 is modified to Phosphoserine. Positions 156 to 472 (YEIVGNLGEG…LAEALLHPFF (317 aa)) constitute a Protein kinase domain. Residues 162 to 170 (LGEGTFGKV) and Lys186 contribute to the ATP site. Asp283 functions as the Proton acceptor in the catalytic mechanism.

Belongs to the protein kinase superfamily. CMGC Ser/Thr protein kinase family. Lammer subfamily. Autophosphorylates on all three types of residues. In terms of tissue distribution, endothelial cells.

Its subcellular location is the nucleus. It is found in the cytoplasm. The protein localises to the cytoplasmic vesicle. The protein resides in the secretory vesicle. It localises to the acrosome. Its subcellular location is the nucleus speckle. The catalysed reaction is L-seryl-[protein] + ATP = O-phospho-L-seryl-[protein] + ADP + H(+). The enzyme catalyses L-threonyl-[protein] + ATP = O-phospho-L-threonyl-[protein] + ADP + H(+). It catalyses the reaction L-tyrosyl-[protein] + ATP = O-phospho-L-tyrosyl-[protein] + ADP + H(+). With respect to regulation, leucettine L41 inhibits its kinase activity and affects the regulation of alternative splicing mediated by phosphorylation of SR proteins. In terms of biological role, dual specificity kinase acting on both serine/threonine and tyrosine-containing substrates. Phosphorylates serine- and arginine-rich (SR) proteins of the spliceosomal complex. May be a constituent of a network of regulatory mechanisms that enable SR proteins to control RNA splicing and can cause redistribution of SR proteins from speckles to a diffuse nucleoplasmic distribution. Phosphorylates SRSF1 and SRSF3. Regulates the alternative splicing of tissue factor (F3) pre-mRNA in endothelial cells. The polypeptide is Dual specificity protein kinase CLK3 (Homo sapiens (Human)).